A 393-amino-acid chain; its full sequence is S-adenosylmethionine synthase (393 aa).

Glutamate 9 contacts Mg(2+). Histidine 15 is an ATP binding site. Glutamate 43 is a binding site for K(+). The L-methionine site is built by glutamate 56 and glutamine 99. Residues 167–169 (DGK), 235–238 (SGRF), aspartate 246, 252–253 (RK), alanine 269, lysine 273, and lysine 277 contribute to the ATP site. Position 246 (aspartate 246) interacts with L-methionine. Lysine 277 contributes to the L-methionine binding site.

Belongs to the AdoMet synthase family. Homotetramer. Mn(2+) serves as cofactor. Requires Mg(2+) as cofactor. It depends on Co(2+) as a cofactor. The cofactor is K(+).

It is found in the cytoplasm. The catalysed reaction is L-methionine + ATP + H2O = S-adenosyl-L-methionine + phosphate + diphosphate. It functions in the pathway amino-acid biosynthesis; S-adenosyl-L-methionine biosynthesis; S-adenosyl-L-methionine from L-methionine: step 1/1. Its function is as follows. Catalyzes the formation of S-adenosylmethionine from methionine and ATP. The reaction comprises two steps that are both catalyzed by the same enzyme: formation of S-adenosylmethionine (AdoMet) and triphosphate, and subsequent hydrolysis of the triphosphate. This is S-adenosylmethionine synthase (SAM) from Camellia sinensis (Tea plant).